The primary structure comprises 85 residues: Cell division protein ZapA (85 aa).

A coiled-coil region spans residues 60–85 (AVNVVHDYLKLKEQYEKLEIQLKEKE).

Belongs to the ZapA family. Type 2 subfamily. In terms of assembly, homodimer. Interacts with FtsZ.

Its subcellular location is the cytoplasm. Functionally, activator of cell division through the inhibition of FtsZ GTPase activity, therefore promoting FtsZ assembly into bundles of protofilaments necessary for the formation of the division Z ring. It is recruited early at mid-cell but it is not essential for cell division. In Bacillus pumilus (strain SAFR-032), this protein is Cell division protein ZapA.